Reading from the N-terminus, the 712-residue chain is Capsid protein (712 aa).

2 disordered regions span residues 614–633 (LTST…KEVR) and 646–665 (CWMS…PESS). Residues 670 to 706 (YDNHTKLAKRVKKEIHNQNRRHRLLLAHLRRERDRLL) adopt a coiled-coil conformation.

It belongs to the anelloviridae capsid protein family.

It localises to the virion. Functionally, self-assembles to form an icosahedral capsid with a T=1 symmetry, about 30 nm in diameter, and consisting of 60 capsid proteins. The capsid encapsulates the genomic DNA. Capsid protein is involved in attachment and entry into the host cell. The chain is Capsid protein from Torque teno tamarin virus (isolate So-TTV2).